Here is an 88-residue protein sequence, read N- to C-terminus: MVKNSFISVIPQEEKNKGSVEFQVFSFTNKIRKLTSHLELHRKDYSSQIGLRRILGKRQRLLAYLSKKNRVRYKELIDQLGIREPKTR.

It belongs to the universal ribosomal protein uS15 family. In terms of assembly, part of the 30S ribosomal subunit.

The protein localises to the plastid. The protein resides in the chloroplast. The protein is Small ribosomal subunit protein uS15c (rps15) of Calycanthus floridus var. glaucus (Eastern sweetshrub).